A 333-amino-acid polypeptide reads, in one-letter code: Ketol-acid reductoisomerase (NADP(+)) (333 aa).

Residues 2–182 form the KARI N-terminal Rossmann domain; that stretch reads AKMYYDSDAS…GCTRAGVLET (181 aa). NADP(+) contacts are provided by residues 25 to 28, R48, S51, and 83 to 86; these read YGSQ and DERQ. The active site involves H108. Residue G134 participates in NADP(+) binding. Residues 183-328 enclose the KARI C-terminal knotted domain; sequence TFKEETETDL…AELRAMMPFI (146 aa). Residues D191, E195, E227, and E231 each contribute to the Mg(2+) site. S252 serves as a coordination point for substrate.

This sequence belongs to the ketol-acid reductoisomerase family. Mg(2+) serves as cofactor.

The catalysed reaction is (2R)-2,3-dihydroxy-3-methylbutanoate + NADP(+) = (2S)-2-acetolactate + NADPH + H(+). It carries out the reaction (2R,3R)-2,3-dihydroxy-3-methylpentanoate + NADP(+) = (S)-2-ethyl-2-hydroxy-3-oxobutanoate + NADPH + H(+). It participates in amino-acid biosynthesis; L-isoleucine biosynthesis; L-isoleucine from 2-oxobutanoate: step 2/4. Its pathway is amino-acid biosynthesis; L-valine biosynthesis; L-valine from pyruvate: step 2/4. Functionally, involved in the biosynthesis of branched-chain amino acids (BCAA). Catalyzes an alkyl-migration followed by a ketol-acid reduction of (S)-2-acetolactate (S2AL) to yield (R)-2,3-dihydroxy-isovalerate. In the isomerase reaction, S2AL is rearranged via a Mg-dependent methyl migration to produce 3-hydroxy-3-methyl-2-ketobutyrate (HMKB). In the reductase reaction, this 2-ketoacid undergoes a metal-dependent reduction by NADPH to yield (R)-2,3-dihydroxy-isovalerate. In Desulfitobacterium hafniense (strain DSM 10664 / DCB-2), this protein is Ketol-acid reductoisomerase (NADP(+)).